The following is a 516-amino-acid chain: Putative thymidine phosphorylase (516 aa).

It belongs to the thymidine/pyrimidine-nucleoside phosphorylase family. Type 2 subfamily.

The catalysed reaction is thymidine + phosphate = 2-deoxy-alpha-D-ribose 1-phosphate + thymine. The chain is Putative thymidine phosphorylase from Methylococcus capsulatus (strain ATCC 33009 / NCIMB 11132 / Bath).